The sequence spans 518 residues: Nitrogenase iron-iron protein alpha chain (518 aa).

Residues cysteine 49, cysteine 75, and cysteine 138 each contribute to the [8Fe-7S] cluster site. 2 residues coordinate [8Fe-9S-C-homocitryl] cluster: cysteine 257 and histidine 423.

Belongs to the NifD/NifK/NifE/NifN family. Hexamer of two alpha, two beta, and two delta chains. [8Fe-7S] cluster serves as cofactor. The cofactor is [8Fe-9S-C-homocitryl] cluster.

It carries out the reaction N2 + 8 reduced [2Fe-2S]-[ferredoxin] + 16 ATP + 16 H2O = H2 + 8 oxidized [2Fe-2S]-[ferredoxin] + 2 NH4(+) + 16 ADP + 16 phosphate + 6 H(+). In terms of biological role, this iron-iron protein is part of the nitrogenase complex that catalyzes the key enzymatic reactions in nitrogen fixation. Other nitrogenase complexes utilize a molybdenum-iron protein or a vanadium-iron protein. This Azotobacter vinelandii protein is Nitrogenase iron-iron protein alpha chain (anfD).